Here is a 345-residue protein sequence, read N- to C-terminus: Anthranilate phosphoribosyltransferase (345 aa).

Residues 77 to 79 (TAG), 82 to 83 (GD), Thr87, 89 to 92 (NVST), 106 to 114 (KHGNRAVSG), and Ser118 contribute to the 5-phospho-alpha-D-ribose 1-diphosphate site. Gly79 is an anthranilate binding site. Mg(2+) is bound at residue Ser91. Position 109 (Asn109) interacts with anthranilate. Arg164 lines the anthranilate pocket. Mg(2+) contacts are provided by Asp223 and Glu224.

Belongs to the anthranilate phosphoribosyltransferase family. Homodimer. Requires Mg(2+) as cofactor.

It carries out the reaction N-(5-phospho-beta-D-ribosyl)anthranilate + diphosphate = 5-phospho-alpha-D-ribose 1-diphosphate + anthranilate. Its pathway is amino-acid biosynthesis; L-tryptophan biosynthesis; L-tryptophan from chorismate: step 2/5. Functionally, catalyzes the transfer of the phosphoribosyl group of 5-phosphorylribose-1-pyrophosphate (PRPP) to anthranilate to yield N-(5'-phosphoribosyl)-anthranilate (PRA). This chain is Anthranilate phosphoribosyltransferase, found in Saccharolobus solfataricus (strain ATCC 35092 / DSM 1617 / JCM 11322 / P2) (Sulfolobus solfataricus).